Reading from the N-terminus, the 1927-residue chain is Integrin beta-like protein A (1927 aa).

The first 20 residues, 1–20 (MNRILTLFILFISLFIVCEA), serve as a signal peptide directing secretion. At 21 to 1860 (THFRFGTMSW…KENNNKTVLT (1840 aa)) the chain is on the extracellular side. Asparagine 309 is a glycosylation site (N-linked (GlcNAc...) asparagine). Residues 425-462 (YGEKCDPVDPCVNGESNEGSQGNGKCTCYYGWEGKNCD) form the EGF-like domain. 2 disulfides stabilise this stretch: cysteine 435/cysteine 450 and cysteine 452/cysteine 461. A VWFA domain is found at 522-709 (EVLVLVDSQP…VLSKAVVKAI (188 aa)). N-linked (GlcNAc...) asparagine glycans are attached at residues asparagine 1122, asparagine 1516, asparagine 1717, asparagine 1723, and asparagine 1855. A helical membrane pass occupies residues 1861 to 1881 (GAIAGAAAGAGLLAAGAWFLL). Residues 1882–1927 (KKSAPPTDAFFGEGAFADGAVSTNPMYEESGRSAINPLYEASSENL) are Cytoplasmic-facing.

This sequence belongs to the SIB family. Interacts with talA/talin.

The protein localises to the membrane. In terms of biological role, implicated in cellular adhesion to substrate or phagocytic particles. This chain is Integrin beta-like protein A (sibA), found in Dictyostelium discoideum (Social amoeba).